Consider the following 258-residue polypeptide: MEKTSKKMIGRRFEGKVAIVTASTQGIGFAIAYRLGLEGAAVVISSRKQKNVDEAVEKLKAQGIEVLGVVCHVSNSKQRKNLIDTTVKKYGKIDVVVSNAAANPSTDALLETQESVLDKIWEINVKASILLLQEAAPHLQKGSSVVLISSITGYQPPASMAMYGVTKTALLGLTKALAEEMAPYVRVNCVAPGFVPTNFADYLTRNEDIRNSLEEKTFLKRLGTTQDMASATAFLASDDASYITGETVVVAGGTPSRL.

Residue I19–V43 coordinates NAD(+). S150 is a binding site for substrate. Catalysis depends on Y163, which acts as the Proton acceptor.

This sequence belongs to the short-chain dehydrogenases/reductases (SDR) family.

Its function is as follows. Has no tropinone reductase activity. The polypeptide is Tropinone reductase-like 3 (Erythroxylum coca (Coca plant)).